A 233-amino-acid chain; its full sequence is ATP-dependent Clp protease proteolytic subunit 2 (233 aa).

Ser-116 (nucleophile) is an active-site residue. His-141 is an active-site residue. The disordered stretch occupies residues 214 to 233 (EGLKSIQPNGEAADDSEDDA).

The protein belongs to the peptidase S14 family. As to quaternary structure, fourteen ClpP subunits assemble into 2 heptameric rings which stack back to back to give a disk-like structure with a central cavity, resembling the structure of eukaryotic proteasomes.

Its subcellular location is the cytoplasm. It carries out the reaction Hydrolysis of proteins to small peptides in the presence of ATP and magnesium. alpha-casein is the usual test substrate. In the absence of ATP, only oligopeptides shorter than five residues are hydrolyzed (such as succinyl-Leu-Tyr-|-NHMec, and Leu-Tyr-Leu-|-Tyr-Trp, in which cleavage of the -Tyr-|-Leu- and -Tyr-|-Trp bonds also occurs).. Functionally, cleaves peptides in various proteins in a process that requires ATP hydrolysis. Has a chymotrypsin-like activity. Plays a major role in the degradation of misfolded proteins. This Salinibacter ruber (strain DSM 13855 / M31) protein is ATP-dependent Clp protease proteolytic subunit 2.